The chain runs to 24 residues: Citropin-3.1.2 (24 aa).

Expressed by the dorsal and submental skin glands.

The protein resides in the secreted. This Ranoidea citropa (Australian Blue Mountains tree frog) protein is Citropin-3.1.2.